We begin with the raw amino-acid sequence, 424 residues long: Serine--tRNA ligase (424 aa).

An L-serine-binding site is contributed by 231-233 (TAE). 261–263 (RSE) contributes to the ATP binding site. Glu-284 is an L-serine binding site. 348–351 (ETSS) contacts ATP. Position 383 (Ser-383) interacts with L-serine.

Belongs to the class-II aminoacyl-tRNA synthetase family. Type-1 seryl-tRNA synthetase subfamily. As to quaternary structure, homodimer. The tRNA molecule binds across the dimer.

The protein resides in the cytoplasm. It catalyses the reaction tRNA(Ser) + L-serine + ATP = L-seryl-tRNA(Ser) + AMP + diphosphate + H(+). It carries out the reaction tRNA(Sec) + L-serine + ATP = L-seryl-tRNA(Sec) + AMP + diphosphate + H(+). It functions in the pathway aminoacyl-tRNA biosynthesis; selenocysteinyl-tRNA(Sec) biosynthesis; L-seryl-tRNA(Sec) from L-serine and tRNA(Sec): step 1/1. Its function is as follows. Catalyzes the attachment of serine to tRNA(Ser). Is also able to aminoacylate tRNA(Sec) with serine, to form the misacylated tRNA L-seryl-tRNA(Sec), which will be further converted into selenocysteinyl-tRNA(Sec). This chain is Serine--tRNA ligase, found in Metamycoplasma arthritidis (strain 158L3-1) (Mycoplasma arthritidis).